The chain runs to 598 residues: Transcription factor cpaR (598 aa).

Positions 22–51 form a DNA-binding region, zn(2)-C6 fungal-type; that stretch reads CNGCRERKRRCVRRKRELPCLSCQAENRPC.

It localises to the nucleus. In terms of biological role, transcription factor; part of the gene cluster that mediates the biosynthesis of the fungal neurotoxin cyclopiazonic acid (CPA), a nanomolar inhibitor of Ca(2+)-ATPase with a unique pentacyclic indole tetramic acid scaffold. The polypeptide is Transcription factor cpaR (Aspergillus oryzae (Yellow koji mold)).